The primary structure comprises 715 residues: Polyribonucleotide nucleotidyltransferase (715 aa).

The Mg(2+) site is built by Asp-487 and Asp-493. Residues Pro-554–Ile-613 form the KH domain. An S1 motif domain is found at Gly-623–Lys-691.

This sequence belongs to the polyribonucleotide nucleotidyltransferase family. Requires Mg(2+) as cofactor.

Its subcellular location is the cytoplasm. It carries out the reaction RNA(n+1) + phosphate = RNA(n) + a ribonucleoside 5'-diphosphate. In terms of biological role, involved in mRNA degradation. Catalyzes the phosphorolysis of single-stranded polyribonucleotides processively in the 3'- to 5'-direction. This chain is Polyribonucleotide nucleotidyltransferase, found in Dechloromonas aromatica (strain RCB).